The sequence spans 152 residues: Superoxide dismutase [Cu-Zn] (152 aa).

Histidine 45, histidine 47, and histidine 62 together coordinate Cu cation. A disulfide bridge links cysteine 56 with cysteine 145. Histidine 62, histidine 70, histidine 79, and aspartate 82 together coordinate Zn(2+). Histidine 119 contacts Cu cation.

The protein belongs to the Cu-Zn superoxide dismutase family. As to quaternary structure, homodimer. The cofactor is Cu cation. Requires Zn(2+) as cofactor.

It localises to the cytoplasm. It catalyses the reaction 2 superoxide + 2 H(+) = H2O2 + O2. Functionally, destroys radicals which are normally produced within the cells and which are toxic to biological systems. This is Superoxide dismutase [Cu-Zn] (SODCC) from Nicotiana plumbaginifolia (Leadwort-leaved tobacco).